Here is an 80-residue protein sequence, read N- to C-terminus: RNA-binding protein Hfq (80 aa).

Positions 7-67 constitute a Sm domain; the sequence is ESFLNTARKK…ITTIVPHERL (61 aa).

This sequence belongs to the Hfq family. In terms of assembly, homohexamer.

Functionally, RNA chaperone that binds small regulatory RNA (sRNAs) and mRNAs to facilitate mRNA translational regulation in response to envelope stress, environmental stress and changes in metabolite concentrations. Also binds with high specificity to tRNAs. This is RNA-binding protein Hfq from Aquifex aeolicus (strain VF5).